The primary structure comprises 159 residues: Urease accessory protein UreE (159 aa).

The tract at residues 140 to 159 (GAYHGTGHHHHGHGHDPHHG) is disordered.

This sequence belongs to the UreE family.

Its subcellular location is the cytoplasm. Functionally, involved in urease metallocenter assembly. Binds nickel. Probably functions as a nickel donor during metallocenter assembly. This Sinorhizobium fredii (strain NBRC 101917 / NGR234) protein is Urease accessory protein UreE.